The sequence spans 414 residues: Multidrug resistance protein MdtG (414 aa).

The next 10 membrane-spanning stretches (helical) occupy residues 14–34 (LFVT…IMPF), 56–76 (LVFS…GSLA), 89–109 (ALGM…WQFL), 113–133 (ALLG…ATQV), 144–164 (TLST…GLLA), 171–191 (PVFF…WFYV), 219–239 (ILSL…IAPI), 254–274 (LAFV…ISAP), 288–308 (ILIA…FVQT), and 376–396 (AVFC…YWCL).

This sequence belongs to the major facilitator superfamily. DHA1 family. MdtG (TC 2.A.1.2.20) subfamily.

It localises to the cell inner membrane. The polypeptide is Multidrug resistance protein MdtG (Yersinia enterocolitica serotype O:8 / biotype 1B (strain NCTC 13174 / 8081)).